Here is a 1098-residue protein sequence, read N- to C-terminus: Protein translocase subunit SecA (1098 aa).

Residues glutamine 176, 194–198 (GEGKT), and aspartate 696 contribute to the ATP site. The interval 1024–1098 (EPEQVREAAP…KYKNCHGQNA (75 aa)) is disordered. Composition is skewed to basic and acidic residues over residues 1041 to 1051 (QYREEKQDLSD) and 1058 to 1077 (AEHD…KTVG). The Zn(2+) site is built by cysteine 1082, cysteine 1084, cysteine 1093, and histidine 1094.

Belongs to the SecA family. As to quaternary structure, monomer and homodimer. Part of the essential Sec protein translocation apparatus which comprises SecA, SecYEG and auxiliary proteins SecDF. Other proteins may also be involved. Requires Zn(2+) as cofactor.

The protein resides in the cell inner membrane. Its subcellular location is the cytoplasm. It catalyses the reaction ATP + H2O + cellular proteinSide 1 = ADP + phosphate + cellular proteinSide 2.. In terms of biological role, part of the Sec protein translocase complex. Interacts with the SecYEG preprotein conducting channel. Has a central role in coupling the hydrolysis of ATP to the transfer of proteins into and across the cell membrane, serving as an ATP-driven molecular motor driving the stepwise translocation of polypeptide chains across the membrane. The chain is Protein translocase subunit SecA from Phocaeicola vulgatus (strain ATCC 8482 / DSM 1447 / JCM 5826 / CCUG 4940 / NBRC 14291 / NCTC 11154) (Bacteroides vulgatus).